Here is a 266-residue protein sequence, read N- to C-terminus: Hydroxymethylpyrimidine/phosphomethylpyrimidine kinase (266 aa).

Glutamine 43 serves as a coordination point for 4-amino-5-hydroxymethyl-2-methylpyrimidine.

Belongs to the ThiD family.

It catalyses the reaction 4-amino-5-hydroxymethyl-2-methylpyrimidine + ATP = 4-amino-2-methyl-5-(phosphooxymethyl)pyrimidine + ADP + H(+). The enzyme catalyses 4-amino-2-methyl-5-(phosphooxymethyl)pyrimidine + ATP = 4-amino-2-methyl-5-(diphosphooxymethyl)pyrimidine + ADP. It participates in cofactor biosynthesis; thiamine diphosphate biosynthesis; 4-amino-2-methyl-5-diphosphomethylpyrimidine from 5-amino-1-(5-phospho-D-ribosyl)imidazole: step 2/3. The protein operates within cofactor biosynthesis; thiamine diphosphate biosynthesis; 4-amino-2-methyl-5-diphosphomethylpyrimidine from 5-amino-1-(5-phospho-D-ribosyl)imidazole: step 3/3. In terms of biological role, catalyzes the phosphorylation of hydroxymethylpyrimidine phosphate (HMP-P) to HMP-PP, and of HMP to HMP-P. In Rhizobium meliloti (strain 1021) (Ensifer meliloti), this protein is Hydroxymethylpyrimidine/phosphomethylpyrimidine kinase (thiD).